Consider the following 58-residue polypeptide: Conotoxin TxXIIIA (58 aa).

The signal sequence occupies residues 1–22 (MRCLPVFVILLLLIASVPSVDA). Positions 23 to 46 (ELKAKDDMPQASFHDNAERDQQKK) are excised as a propeptide.

Homodimer; disulfide-linked. Post-translationally, 5 disulfide bonds are present in each homodimer: two intrachain disulfide bonds per subunit, and one interchain disulfide bond linking the two subunits. As to expression, expressed by the venom duct.

The protein resides in the secreted. This Conus textile (Cloth-of-gold cone) protein is Conotoxin TxXIIIA.